Here is an 843-residue protein sequence, read N- to C-terminus: MNTNKLEENSPEEDTGKFEWKPKVKDEFKDISIYFSKEEWAEMGEWEKIRYRNVKRNYKMLISIGLRAPRPAFMCYQRQAMKPQINDSEDSDEEWTPKQQVSPPWVPFRVKHSKQQKESSRMPFSGESNVKEGSGIENLLNTSGSEHVQKPVSSLEEGNTSGQHSGKKLKLRKKNVEVKMYRLRERKGLAYEEVSEPQDDDYLYCEKCQNFFIDSCPNHGPPLFVKDSMVDRGHPNHSVLSLPPGLRISPSGIPEAGLGVWNEASDLPVGLHFGPYEGQITEDEEAANSGYSWLITKGRNCYEYVDGQDESQANWMRYVNCARDDEEQNLVAFQYHRKIFYRTCRVIRPGCELLVWYGDEYGQELGIKWGSKMKKGFTAGRELRTEIHPCLLCSLAFSSQKFLTQHMEWNHRTEIFPGTSARINPKPGDPCSDQLQEQHVDSQNKNDKASNEVKRKSKPRQRISTTFPSTLKEQMRSEESKRTVEELRTGQTTNTEDTVKSFIASEISSIERQCGQYFSDKSNVNEHQKTHTGEKPYVCRECGRGFTQNSHLIQHQRTHTGEKPYVCRECGRGFTQKSDLIKHQRTHTGEKPYVCRECGRGFTQKSDLIKHQRTHTGEKPYVCRECGRGFTQKSVLIKHQRTHTGEKPYVCRECGRGFTQKSVLIKHQRTHTGEKPYVCRECGRGFTAKSVLIQHQRTHTGEKPYVCRECGRGFTAKSNLIQHQRTHTGEKPYVCRECGRGFTAKSVLIQHQRTHTGEKPYVCRECGRGFTAKSVLIQHQRTHTGEKPYVCRECGRGFTQKSNLIKHQRTHTGEKPYVCRECGWGFTQKSDLIQHQRTHTREK.

In terms of domain architecture, KRAB-related spans 23 to 86; sequence KVKDEFKDIS…QRQAMKPQIN (64 aa). Disordered stretches follow at residues 85-104 and 110-170; these read INDS…VSPP and VKHS…KKLK. The Zn(2+) site is built by C205, C208, C216, and H219. Positions 244-358 constitute an SET domain; that stretch reads PGLRISPSGI…PGCELLVWYG (115 aa). Residues 256–258, Y291, and 320–321 contribute to the S-adenosyl-L-methionine site; these read AGL and NC. 288–294 is a binding site for substrate; sequence NSGYSWL. Y357 is a binding site for substrate. An N6,N6,N6-trimethyllysine; alternate modification is found at K368. The residue at position 368 (K368) is an N6-methyllysine; alternate. N6-methyllysine occurs at positions 372 and 374. The C2H2-type 1 zinc-finger motif lies at 388–411; the sequence is HPCLLCSLAFSSQKFLTQHMEWNH. Residues C390, C393, H406, and H411 each contribute to the Zn(2+) site. A disordered region spans residues 418–493; it reads GTSARINPKP…VEELRTGQTT (76 aa). The segment covering 436 to 454 has biased composition (basic and acidic residues); the sequence is QEQHVDSQNKNDKASNEVK. Residues 462–472 are compositionally biased toward polar residues; the sequence is RISTTFPSTLK. The segment covering 473–488 has biased composition (basic and acidic residues); it reads EQMRSEESKRTVEELR. The C2H2-type 2; degenerate zinc-finger motif lies at 513–531; sequence QCGQYFSDKSNVNEHQKTH. 11 consecutive C2H2-type zinc fingers follow at residues 537–559, 565–587, 593–615, 621–643, 649–671, 677–699, 705–727, 733–755, 761–783, 789–811, and 817–839; these read YVCR…QRTH. Zn(2+)-binding residues include C707, C710, H723, H727, C735, C738, H751, H755, C763, C766, H779, H783, C791, C794, H807, and H811. The tract at residues 715–805 is DNA-binding; that stretch reads TAKSNLIQHQ…RGFTQKSNLI (91 aa).

The protein belongs to the class V-like SAM-binding methyltransferase superfamily. Homodimer. Interacts with EHMT2 and CDYL; interaction only takes place when PRDM9 is bound to hotspot DNA. Interacts with CXXC1; this interaction does not link PRDM9-activated recombination hotspot sites with DSB machinery and is not required for the hotspot recognition pathway. Forms a complex with EWSR1, REC8, SYCP3 and SYCP1; complex formation is dependent of phosphorylated form of REC8 and requires PRDM9 bound to hotspot DNA; EWSR1 joins PRDM9 with the chromosomal axis through REC8. Mono-methylated; automethylated. Tri-methylated; automethylated. Mono-methylation is predominant; automethylation is lower and slower than H3 peptide methylation and is in a highest S-adenosyl-L-methionine concentration-dependent. There are two major sites for automethylation at Lys-368 and Lys-374. Lysines can be simultaneously methylated, such as Lys-368(me3)/Lys-372(me1), Lys-368(me1)/Lys-374(me1) and Lys-368(me1)/Lys-372(me1)/Lys-374(me1). Automethylation is an intramolecular (cis) process. In terms of tissue distribution, specifically expressed in germ cells entering meiotic prophase in female fetal gonads and in postnatal testis. Expressed in early meiotic prophase.

The protein localises to the nucleus. Its subcellular location is the chromosome. The enzyme catalyses L-lysyl-[protein] + S-adenosyl-L-methionine = N(6)-methyl-L-lysyl-[protein] + S-adenosyl-L-homocysteine + H(+). It catalyses the reaction N(6),N(6)-dimethyl-L-lysyl-[protein] + S-adenosyl-L-methionine = N(6),N(6),N(6)-trimethyl-L-lysyl-[protein] + S-adenosyl-L-homocysteine + H(+). The catalysed reaction is L-lysyl(4)-[histone H3] + 3 S-adenosyl-L-methionine = N(6),N(6),N(6)-trimethyl-L-lysyl(4)-[histone H3] + 3 S-adenosyl-L-homocysteine + 3 H(+). It carries out the reaction L-lysyl(36)-[histone H3] + 3 S-adenosyl-L-methionine = N(6),N(6),N(6)-trimethyl-L-lysyl(36)-[histone H3] + 3 S-adenosyl-L-homocysteine + 3 H(+). The enzyme catalyses L-lysyl(9)-[histone H3] + 3 S-adenosyl-L-methionine = N(6),N(6),N(6)-trimethyl-L-lysyl(9)-[histone H3] + 3 S-adenosyl-L-homocysteine + 3 H(+). It catalyses the reaction L-lysyl(20)-[histone H4] + S-adenosyl-L-methionine = N(6)-methyl-L-lysyl(20)-[histone H4] + S-adenosyl-L-homocysteine + H(+). The catalysed reaction is N(6)-methyl-L-lysyl(20)-[histone H4] + S-adenosyl-L-methionine = N(6),N(6)-dimethyl-L-lysyl(20)-[histone H4] + S-adenosyl-L-homocysteine + H(+). Histone methyltransferase that sequentially mono-, di-, and tri-methylates both 'Lys-4' (H3K4) and 'Lys-36' (H3K36) of histone H3 to produce respectively trimethylated 'Lys-4' (H3K4me3) and trimethylated 'Lys-36' (H3K36me3) histone H3 and plays a key role in meiotic prophase by determining hotspot localization thereby promoting meiotic recombination. Can also methylate all four core histones with H3 being the best substrate and the most highly modified. Is also able, on one hand, to mono and di-methylate H4K20 and on other hand to trimethylate H3K9 with the di-methylated H3K9 as the best substrate. During meiotic prophase, binds specific DNA sequences through its zinc finger domains thereby determining hotspot localization where it promotes local H3K4me3 and H3K36me3 enrichment on the same nucleosomes through its histone methyltransferase activity. Thereby promotes double-stranded breaks (DSB) formation, at this subset of PRDM9-binding sites, that initiates meiotic recombination for the proper meiotic progression. During meiotic progression hotspot-bound PRDM9 interacts with several complexes; in early leptonema binds CDYL and EHMT2 followed by EWSR1 and CXXC1 by the end of leptonema. EWSR1 joins PRDM9 with the chromosomal axis through REC8. In this way, controls the DSB repair pathway, pairing of homologous chromosomes and sex body formation. Moreover plays a central role in the transcriptional activation of genes during early meiotic prophase thanks to H3K4me3 and H3K36me3 enrichment that represents a specific tag for epigenetic transcriptional activation. In addition performs automethylation. Acetylation and phosphorylation of histone H3 attenuate or prevent histone H3 methylation. The polypeptide is Histone-lysine N-methyltransferase PRDM9 (Mus musculus (Mouse)).